Reading from the N-terminus, the 294-residue chain is N-acetylmuramic acid 6-phosphate etherase (294 aa).

The SIS domain occupies 54–217 (VTKSFEEEGR…STASMIGVGK (164 aa)). The Proton donor role is filled by Glu82. Residue Glu113 is part of the active site.

It belongs to the GCKR-like family. MurNAc-6-P etherase subfamily. As to quaternary structure, homodimer.

The catalysed reaction is N-acetyl-D-muramate 6-phosphate + H2O = N-acetyl-D-glucosamine 6-phosphate + (R)-lactate. It participates in amino-sugar metabolism; N-acetylmuramate degradation. In terms of biological role, specifically catalyzes the cleavage of the D-lactyl ether substituent of MurNAc 6-phosphate, producing GlcNAc 6-phosphate and D-lactate. The protein is N-acetylmuramic acid 6-phosphate etherase of Bacillus mycoides (strain KBAB4) (Bacillus weihenstephanensis).